Reading from the N-terminus, the 549-residue chain is Protein wntless homolog (549 aa).

Positions 1–34 (MAGGAVIENLSNRKLFVIFAGLLVIQIMFFLIGA) are cleaved as a signal peptide. Residues 36–236 (YAPSPSSYME…RLIEIHQNGG (201 aa)) are Lumenal-facing. The chain crosses the membrane as a helical span at residues 237–257 (FTLVWLWTKTFMTPVVAICLW). The Cytoplasmic segment spans residues 258 to 275 (WYYNRINQLARNPLLLER). Residues 276-296 (AILLLGLSLVILDFPIEWISL) traverse the membrane as a helical segment. Residues 297–310 (TYRIPFLLLISDLR) lie on the Lumenal side of the membrane. Residues 311-331 (QGLFYTVLFSFWLIFAGEHLI) form a helical membrane-spanning segment. Residues 332-345 (DDNTRNNLKSYRFN) lie on the Cytoplasmic side of the membrane. Residues 346 to 366 (LSFIITASLGLLIYDLIERGI) traverse the membrane as a helical segment. Residues 367 to 383 (QLYDPFYSVWSSPTGSQ) lie on the Lumenal side of the membrane. A helical membrane pass occupies residues 384 to 404 (IAYFAIFISAISTVAYFIFLF). Over 405-439 (FKIARVWSTIKSKRSAQIYQTSENRRLKVEGVIYR) the chain is Cytoplasmic. The chain crosses the membrane as a helical span at residues 440–460 (FKFLMLFTLLCSAFTIAAYFM). Residues 461-483 (KQYGEAQLHGDEARDGFLTGSTS) are Lumenal-facing. A helical transmembrane segment spans residues 484 to 504 (AFFTGAFGMCNIYVLLLLAMY). Topologically, residues 505-549 (APSHKHYRGASQLIDENDDDEIMEDPSNQHTESNAMTTFLKPSTD) are cytoplasmic. Residues 524-549 (DEIMEDPSNQHTESNAMTTFLKPSTD) form a disordered region. The span at 530–549 (PSNQHTESNAMTTFLKPSTD) shows a compositional bias: polar residues.

The protein belongs to the wntless family. As to expression, expressed in the tail hypodermis, stomatointestinal muscle, the mesoblast cell M and its descendants, CAN neurons, the developing vulva, the pharynx and the pharyngeal intestinal valve.

The protein localises to the cell membrane. It localises to the early endosome membrane. Its subcellular location is the golgi apparatus membrane. It is found in the basal cell membrane. The protein resides in the late endosome membrane. Probable sorting receptor which regulates endocytosis and secretion of the wnt ligand egl-20. Recycling of mig-14 from the plasma membrane to the Golgi apparatus by the retromer complex is essential for its function. Its endosomal trafficking is regulated by its association with sorting nexin snx-3 on early endosomes and the mtm-6/mtm-9 myotubularin complex. Required in embryonic development for endoderm specification and the correct positioning and orientation of the mitotic spindles and division planes in blastomere cells. Functions during vulval development, playing a role in vulval precursor cell fate specification. During development, specifically regulates the migration of HSN neurons, the left Q neuroblast (QL) and its descendants and the distal tip cells of the gonads. Positioning of Q neuroblasts may be both dependent and independent of hox gene mab-5. Involved in establishing ALM and PLM neuronal cell polarity. This Caenorhabditis elegans protein is Protein wntless homolog.